The chain runs to 230 residues: Ribulose-phosphate 3-epimerase (230 aa).

Ser-10 contributes to the substrate binding site. Residues His-35, Asp-37, and His-68 each contribute to the a divalent metal cation site. Catalysis depends on Asp-37, which acts as the Proton acceptor. Residues His-68, 146 to 149 (GFGG), 179 to 181 (DGG), and 201 to 202 (GS) each bind substrate. Position 179 (Asp-179) interacts with a divalent metal cation. Residue Asp-179 is the Proton donor of the active site.

Belongs to the ribulose-phosphate 3-epimerase family. As to quaternary structure, homohexamer. Requires a divalent metal cation as cofactor.

The enzyme catalyses D-ribulose 5-phosphate = D-xylulose 5-phosphate. The protein operates within carbohydrate degradation. Functionally, catalyzes the reversible epimerization of D-ribulose 5-phosphate to D-xylulose 5-phosphate. This Synechocystis sp. (strain ATCC 27184 / PCC 6803 / Kazusa) protein is Ribulose-phosphate 3-epimerase.